Consider the following 344-residue polypeptide: MALTRNRPFVVVLLLGFVIMSTITIGAQSIGVCYGRNGNNLPSASQVINLYKSNGIGSMRIYDPNSDTLQALRGSDIELILDVPNTDLQSLASDASAAATWVQNNVVNYASEVKFRYIAVGNEVLPTGSNAQYAQYVLPAMKNVQSAITSAGLQDQIKVSTATFSAVLGKSYPPSEGSFSDDVSSFINPIISFLAENGSPLLANIYPYFSYTGDTQNIRLDYALFTASGVVVQDGSYQYQNLFDALLDALYAALEKAGGSNLKIVVSESGWPSEGGTAATVDNARTYYKNLINHVKGGTPRKSGAIETYLFAMFDENQKTGLETEKHFGLFTPGQESKYQISFS.

The first 27 residues, 1-27 (MALTRNRPFVVVLLLGFVIMSTITIGA), serve as a signal peptide directing secretion. Residue Glu-123 is the Proton donor of the active site. The active-site Nucleophile is the Glu-268.

This sequence belongs to the glycosyl hydrolase 17 family.

It catalyses the reaction Hydrolysis of (1-&gt;3)-beta-D-glucosidic linkages in (1-&gt;3)-beta-D-glucans.. Its function is as follows. Implicated in the defense of plants against pathogens. The sequence is that of Glucan endo-1,3-beta-glucosidase from Vitis vinifera (Grape).